We begin with the raw amino-acid sequence, 88 residues long: Gene 86 protein (88 aa).

This is Gene 86 protein (86) from Mycobacterium phage D29 (Mycobacteriophage D29).